The sequence spans 377 residues: Protein RecA (377 aa).

Over residues Met-1–Ser-13 the composition is skewed to polar residues. The tract at residues Met-1–Ser-20 is disordered. Gly-82 to Thr-89 lines the ATP pocket. Residues Gly-346–Gly-377 form a disordered region. The span at Arg-362–Gly-377 shows a compositional bias: polar residues.

This sequence belongs to the RecA family.

The protein resides in the cytoplasm. Can catalyze the hydrolysis of ATP in the presence of single-stranded DNA, the ATP-dependent uptake of single-stranded DNA by duplex DNA, and the ATP-dependent hybridization of homologous single-stranded DNAs. It interacts with LexA causing its activation and leading to its autocatalytic cleavage. This chain is Protein RecA, found in Prochlorococcus marinus (strain NATL1A).